A 353-amino-acid polypeptide reads, in one-letter code: Photosystem II D2 protein (353 aa).

Residue Thr2 is modified to N-acetylthreonine. A Phosphothreonine modification is found at Thr2. The chain crosses the membrane as a helical span at residues 41-61; sequence CAYFAVGGWFTGTTFVTSWYT. Residue His118 coordinates chlorophyll a. A helical membrane pass occupies residues 125 to 141; it reads GFMLRQFELARSVQLRP. Pheophytin a is bound by residues Gln130 and Asn143. The chain crosses the membrane as a helical span at residues 153–166; the sequence is VFVSVFLIYPLGQS. His198 serves as a coordination point for chlorophyll a. A helical transmembrane segment spans residues 208-228; sequence AALLCAIHGATVENTLFEDGD. 2 residues coordinate a plastoquinone: His215 and Phe262. His215 is a binding site for Fe cation. Fe cation is bound at residue His269. Residues 279 to 295 traverse the membrane as a helical segment; it reads GLWMSALGVVGLALNLR.

This sequence belongs to the reaction center PufL/M/PsbA/D family. PSII is composed of 1 copy each of membrane proteins PsbA, PsbB, PsbC, PsbD, PsbE, PsbF, PsbH, PsbI, PsbJ, PsbK, PsbL, PsbM, PsbT, PsbX, PsbY, PsbZ, Psb30/Ycf12, at least 3 peripheral proteins of the oxygen-evolving complex and a large number of cofactors. It forms dimeric complexes. The D1/D2 heterodimer binds P680, chlorophylls that are the primary electron donor of PSII, and subsequent electron acceptors. It shares a non-heme iron and each subunit binds pheophytin, quinone, additional chlorophylls, carotenoids and lipids. There is also a Cl(-1) ion associated with D1 and D2, which is required for oxygen evolution. The PSII complex binds additional chlorophylls, carotenoids and specific lipids. serves as cofactor.

Its subcellular location is the plastid. The protein localises to the chloroplast thylakoid membrane. It carries out the reaction 2 a plastoquinone + 4 hnu + 2 H2O = 2 a plastoquinol + O2. In terms of biological role, photosystem II (PSII) is a light-driven water:plastoquinone oxidoreductase that uses light energy to abstract electrons from H(2)O, generating O(2) and a proton gradient subsequently used for ATP formation. It consists of a core antenna complex that captures photons, and an electron transfer chain that converts photonic excitation into a charge separation. The D1/D2 (PsbA/PsbD) reaction center heterodimer binds P680, the primary electron donor of PSII as well as several subsequent electron acceptors. D2 is needed for assembly of a stable PSII complex. This Ipomoea purpurea (Common morning glory) protein is Photosystem II D2 protein.